A 484-amino-acid polypeptide reads, in one-letter code: Arachin Ahy-3 (484 aa).

Residues 1–20 form the signal peptide; sequence MAKLLALSVCFCFLVLGASS. 2 disulfides stabilise this stretch: cysteine 32-cysteine 65 and cysteine 108-cysteine 305. One can recognise a Cupin type-1 1 domain in the interval 35–253; sequence QRLNAQRPDN…GFQVNEDIVR (219 aa). The disordered stretch occupies residues 208–233; the sequence is QQRSGRQSPKGEEQEQEQENEGGNVF. Positions 295–298 are excised as a propeptide; sequence DFNN. One can recognise a Cupin type-1 2 domain in the interval 311–460; the sequence is MNIGKSTSAD…SYGLQYEQAR (150 aa). The propeptide occupies 479-484; the sequence is MIRTVA.

It belongs to the 11S seed storage protein (globulins) family. In terms of assembly, hexamer; each subunit is composed of an acidic and a basic chain derived from a single precursor and linked by a disulfide bond.

The sequence is that of Arachin Ahy-3 from Arachis hypogaea (Peanut).